We begin with the raw amino-acid sequence, 185 residues long: Large ribosomal subunit protein uL5 (185 aa).

Belongs to the universal ribosomal protein uL5 family. Part of the 50S ribosomal subunit; part of the 5S rRNA/L5/L18/L25 subcomplex. Contacts the 5S rRNA and the P site tRNA. Forms a bridge to the 30S subunit in the 70S ribosome.

Its function is as follows. This is one of the proteins that bind and probably mediate the attachment of the 5S RNA into the large ribosomal subunit, where it forms part of the central protuberance. In the 70S ribosome it contacts protein S13 of the 30S subunit (bridge B1b), connecting the 2 subunits; this bridge is implicated in subunit movement. Contacts the P site tRNA; the 5S rRNA and some of its associated proteins might help stabilize positioning of ribosome-bound tRNAs. In Bradyrhizobium sp. (strain ORS 278), this protein is Large ribosomal subunit protein uL5.